The sequence spans 830 residues: Dimethylglycine oxidase (830 aa).

Residues 14-15 (IV), 35-36 (DQ), 45-48 (STSH), Leu-52, and Val-174 contribute to the FAD site. His-48 carries the pros-8alpha-FAD histidine modification. Catalysis depends on residues His-225 and Tyr-259. Residues Tyr-259 and 360–363 (VWVT) each bind FAD. Tyr-539 contacts (6S)-5,6,7,8-tetrahydrofolate. Asp-552 (for 5,10-methylenetetrahydrofolate synthesis activity) is an active-site residue. (6S)-5,6,7,8-tetrahydrofolate contacts are provided by residues Thr-554, Gly-566, and 658–660 (ELY).

Belongs to the GcvT family. FAD serves as cofactor.

The enzyme catalyses N,N-dimethylglycine + O2 + H2O = sarcosine + formaldehyde + H2O2. It catalyses the reaction N,N-dimethylglycine + (6S)-5,6,7,8-tetrahydrofolate + O2 = sarcosine + (6R)-5,10-methylene-5,6,7,8-tetrahydrofolate + H2O2. Functionally, catalyzes the oxidative demethylation of N,N-dimethylglycine to yield sarcosine, formaldehyde and hydrogen peroxide. The oxidation of dimethylglycine is coupled to the synthesis of 5,10-methylenetetrahydrofolate through an unusual substrate channeling mechanism. This channeling occurs by nonbiased diffusion of the iminium intermediate through a large solvent cavity connecting active site 1 (N-terminus) and active site 2 (C-terminus). The synthesis of 5,10-methylenetetrahydrofolate (at active site 2) prevents the accumulation of formaldehyde, formed by hydrolysis of the iminium intermediate product (at active site 1). Does not oxidize sarcosine. This chain is Dimethylglycine oxidase (dmg), found in Arthrobacter globiformis.